The primary structure comprises 134 residues: DNA-directed RNA polymerase subunit omega (134 aa).

This sequence belongs to the RNA polymerase subunit omega family. As to quaternary structure, the RNAP catalytic core consists of 2 alpha, 1 beta, 1 beta' and 1 omega subunit. When a sigma factor is associated with the core the holoenzyme is formed, which can initiate transcription.

It catalyses the reaction RNA(n) + a ribonucleoside 5'-triphosphate = RNA(n+1) + diphosphate. Its function is as follows. Promotes RNA polymerase assembly. Latches the N- and C-terminal regions of the beta' subunit thereby facilitating its interaction with the beta and alpha subunits. The chain is DNA-directed RNA polymerase subunit omega from Rhizobium etli (strain CIAT 652).